A 114-amino-acid chain; its full sequence is Large ribosomal subunit protein uL22c (114 aa).

Belongs to the universal ribosomal protein uL22 family. Part of the 50S ribosomal subunit.

The protein localises to the plastid. It is found in the chloroplast. In terms of biological role, this protein binds specifically to 23S rRNA. The globular domain of the protein is located near the polypeptide exit tunnel on the outside of the subunit, while an extended beta-hairpin is found that lines the wall of the exit tunnel in the center of the 70S ribosome. The polypeptide is Large ribosomal subunit protein uL22c (rpl22) (Gracilaria tenuistipitata var. liui (Red alga)).